The following is a 297-amino-acid chain: Large ribosomal subunit protein uL3 (297 aa).

Disordered regions lie at residues 124–143 and 258–297; these read NQKIGPKSHGGGGGSKPVRQ and MKEKEKLEQEAKQNAEKSNSDDDVRKEAEKLNKNKEDKGE.

The protein belongs to the universal ribosomal protein uL3 family. As to quaternary structure, part of the 50S ribosomal subunit. Forms a cluster with proteins L14 and L19.

In terms of biological role, one of the primary rRNA binding proteins, it binds directly near the 3'-end of the 23S rRNA, where it nucleates assembly of the 50S subunit. This Mycoplasma mobile (strain ATCC 43663 / 163K / NCTC 11711) (Mesomycoplasma mobile) protein is Large ribosomal subunit protein uL3.